A 338-amino-acid chain; its full sequence is 4-hydroxy-3-methylbut-2-enyl diphosphate reductase (338 aa).

A [4Fe-4S] cluster-binding site is contributed by C21. Positions 50 and 83 each coordinate (2E)-4-hydroxy-3-methylbut-2-enyl diphosphate. 2 residues coordinate dimethylallyl diphosphate: H50 and H83. Isopentenyl diphosphate-binding residues include H50 and H83. C105 lines the [4Fe-4S] cluster pocket. H133 contributes to the (2E)-4-hydroxy-3-methylbut-2-enyl diphosphate binding site. H133 is a dimethylallyl diphosphate binding site. H133 provides a ligand contact to isopentenyl diphosphate. Catalysis depends on E135, which acts as the Proton donor. (2E)-4-hydroxy-3-methylbut-2-enyl diphosphate is bound at residue T173. C203 provides a ligand contact to [4Fe-4S] cluster. The (2E)-4-hydroxy-3-methylbut-2-enyl diphosphate site is built by S231, S232, N233, and S276. S231, S232, N233, and S276 together coordinate dimethylallyl diphosphate. S231, S232, N233, and S276 together coordinate isopentenyl diphosphate.

It belongs to the IspH family. Requires [4Fe-4S] cluster as cofactor.

It carries out the reaction isopentenyl diphosphate + 2 oxidized [2Fe-2S]-[ferredoxin] + H2O = (2E)-4-hydroxy-3-methylbut-2-enyl diphosphate + 2 reduced [2Fe-2S]-[ferredoxin] + 2 H(+). It catalyses the reaction dimethylallyl diphosphate + 2 oxidized [2Fe-2S]-[ferredoxin] + H2O = (2E)-4-hydroxy-3-methylbut-2-enyl diphosphate + 2 reduced [2Fe-2S]-[ferredoxin] + 2 H(+). It participates in isoprenoid biosynthesis; dimethylallyl diphosphate biosynthesis; dimethylallyl diphosphate from (2E)-4-hydroxy-3-methylbutenyl diphosphate: step 1/1. It functions in the pathway isoprenoid biosynthesis; isopentenyl diphosphate biosynthesis via DXP pathway; isopentenyl diphosphate from 1-deoxy-D-xylulose 5-phosphate: step 6/6. Its function is as follows. Catalyzes the conversion of 1-hydroxy-2-methyl-2-(E)-butenyl 4-diphosphate (HMBPP) into a mixture of isopentenyl diphosphate (IPP) and dimethylallyl diphosphate (DMAPP). Acts in the terminal step of the DOXP/MEP pathway for isoprenoid precursor biosynthesis. In Streptomyces coelicolor (strain ATCC BAA-471 / A3(2) / M145), this protein is 4-hydroxy-3-methylbut-2-enyl diphosphate reductase.